The primary structure comprises 221 residues: Orotate phosphoribosyltransferase (221 aa).

K26 serves as a coordination point for 5-phospho-alpha-D-ribose 1-diphosphate. 34-35 (FF) contributes to the orotate binding site. 5-phospho-alpha-D-ribose 1-diphosphate is bound by residues 72–73 (YK), R98, K99, K102, H104, and 123–131 (DDVISAGTS). Orotate is bound by residues S127 and R155.

It belongs to the purine/pyrimidine phosphoribosyltransferase family. PyrE subfamily. As to quaternary structure, homodimer. Requires Mg(2+) as cofactor.

It catalyses the reaction orotidine 5'-phosphate + diphosphate = orotate + 5-phospho-alpha-D-ribose 1-diphosphate. It participates in pyrimidine metabolism; UMP biosynthesis via de novo pathway; UMP from orotate: step 1/2. Functionally, catalyzes the transfer of a ribosyl phosphate group from 5-phosphoribose 1-diphosphate to orotate, leading to the formation of orotidine monophosphate (OMP). In Janthinobacterium sp. (strain Marseille) (Minibacterium massiliensis), this protein is Orotate phosphoribosyltransferase.